The chain runs to 724 residues: Probable methyltransferase PMT28 (724 aa).

Topologically, residues 1–22 (MMERKREMGIAYFARRIKQPRG) are cytoplasmic. A helical; Signal-anchor for type II membrane protein membrane pass occupies residues 23–43 (IWVKMTFIVVLGLCFVFFWSF). The Lumenal segment spans residues 44–724 (LSSSASTFNV…LCAQKTLWRP (681 aa)). The interval 63–211 (EPVSSRTKSA…ISKKRKRKGP (149 aa)) is disordered. Positions 71–98 (SAHEVSESSKLHERGKVESGSKSKEGKK) are enriched in basic and acidic residues. Basic residues predominate over residues 107–125 (HETKKKKEHAVSHPHKKKD). The span at 126 to 140 (VPKPVVEEVVVKEDQ) shows a compositional bias: basic and acidic residues. Positions 141-173 (EHEEAESDDSDQSNKEDGEEGTESDGNEGESDG) are enriched in acidic residues. Residues N305, N316, and N568 are each glycosylated (N-linked (GlcNAc...) asparagine).

The protein belongs to the methyltransferase superfamily.

It is found in the golgi apparatus membrane. The protein is Probable methyltransferase PMT28 of Arabidopsis thaliana (Mouse-ear cress).